We begin with the raw amino-acid sequence, 194 residues long: Large ribosomal subunit protein eL15 (194 aa).

The disordered stretch occupies residues 164 to 194 (SAGKKGRGLRNKGKGAEKIRPSIRANEGKGK). The span at 167 to 176 (KKGRGLRNKG) shows a compositional bias: basic residues. A compositionally biased stretch (basic and acidic residues) spans 177–194 (KGAEKIRPSIRANEGKGK).

Belongs to the eukaryotic ribosomal protein eL15 family.

This chain is Large ribosomal subunit protein eL15 (rpl15e), found in Pyrococcus abyssi (strain GE5 / Orsay).